Consider the following 217-residue polypeptide: Probable transaldolase (217 aa).

K83 serves as the catalytic Schiff-base intermediate with substrate.

The protein belongs to the transaldolase family. Type 3B subfamily.

The protein localises to the cytoplasm. The enzyme catalyses D-sedoheptulose 7-phosphate + D-glyceraldehyde 3-phosphate = D-erythrose 4-phosphate + beta-D-fructose 6-phosphate. Its pathway is carbohydrate degradation; pentose phosphate pathway; D-glyceraldehyde 3-phosphate and beta-D-fructose 6-phosphate from D-ribose 5-phosphate and D-xylulose 5-phosphate (non-oxidative stage): step 2/3. Functionally, transaldolase is important for the balance of metabolites in the pentose-phosphate pathway. The sequence is that of Probable transaldolase from Maricaulis maris (strain MCS10) (Caulobacter maris).